A 37-amino-acid polypeptide reads, in one-letter code: Large ribosomal subunit protein bL36 (37 aa).

The protein belongs to the bacterial ribosomal protein bL36 family.

This Leptothrix cholodnii (strain ATCC 51168 / LMG 8142 / SP-6) (Leptothrix discophora (strain SP-6)) protein is Large ribosomal subunit protein bL36.